Reading from the N-terminus, the 561-residue chain is Methionine--tRNA ligase (561 aa).

The 'HIGH' region signature appears at 11–21 (PYVNTVPHLGN). Zn(2+) contacts are provided by cysteine 143, cysteine 146, cysteine 156, and cysteine 159. Position 334 (lysine 334) interacts with ATP.

Belongs to the class-I aminoacyl-tRNA synthetase family. MetG type 1 subfamily. Requires Zn(2+) as cofactor.

It localises to the cytoplasm. It catalyses the reaction tRNA(Met) + L-methionine + ATP = L-methionyl-tRNA(Met) + AMP + diphosphate. In terms of biological role, is required not only for elongation of protein synthesis but also for the initiation of all mRNA translation through initiator tRNA(fMet) aminoacylation. This is Methionine--tRNA ligase from Ignicoccus hospitalis (strain KIN4/I / DSM 18386 / JCM 14125).